Here is a 41-residue protein sequence, read N- to C-terminus: uncharacterized protein (41 aa).

A helical membrane pass occupies residues 10–32; it reads LIILAVPFMIKTSLKTNLIFFFL.

It is found in the cell inner membrane. This is an uncharacterized protein from Escherichia coli (strain K12).